The following is a 245-amino-acid chain: Carboxy-S-adenosyl-L-methionine synthase (245 aa).

S-adenosyl-L-methionine is bound by residues tyrosine 42, glycine 67 to serine 69, aspartate 92 to asparagine 93, aspartate 120 to isoleucine 121, asparagine 135, and arginine 202.

This sequence belongs to the class I-like SAM-binding methyltransferase superfamily. Cx-SAM synthase family. As to quaternary structure, homodimer.

It catalyses the reaction prephenate + S-adenosyl-L-methionine = carboxy-S-adenosyl-L-methionine + 3-phenylpyruvate + H2O. Catalyzes the conversion of S-adenosyl-L-methionine (SAM) to carboxy-S-adenosyl-L-methionine (Cx-SAM). The polypeptide is Carboxy-S-adenosyl-L-methionine synthase (Vibrio vulnificus (strain CMCP6)).